The chain runs to 904 residues: Envelope glycoprotein B (904 aa).

The N-terminal stretch at 1–30 is a signal peptide; the sequence is MRQGAPARGRRWFVVWALLGLTLGVLVASA. The segment covering 31–52 has biased composition (low complexity); that stretch reads APSSPGTPGVAAATQAANGGPA. The segment at 31–88 is disordered; that stretch reads APSSPGTPGVAAATQAANGGPATPAPPAPGAPPTGDPKPKKNRKPKPPKPPRPAGDNA. Residues 31-774 are Virion surface-facing; the sequence is APSSPGTPGV…SGVSSFMSNP (744 aa). The span at 53–66 shows a compositional bias: pro residues; sequence TPAPPAPGAPPTGD. Residues 70-79 show a composition bias toward basic residues; the sequence is KKNRKPKPPK. Asparagine 87 and asparagine 141 each carry an N-linked (GlcNAc...) asparagine; by host glycan. 5 cysteine pairs are disulfide-bonded: cysteine 116/cysteine 573, cysteine 133/cysteine 529, cysteine 207/cysteine 271, cysteine 364/cysteine 412, and cysteine 596/cysteine 633. 2 involved in fusion and/or binding to host membrane regions span residues 173–179 and 258–265; these read VWFGHRY and RVEAFHRY. N-linked (GlcNAc...) asparagine; by host glycosylation is found at asparagine 398 and asparagine 430. The tract at residues 470–492 is disordered; sequence REQSRKPPNPTPPPPGASANASV. The span at 476–485 shows a compositional bias: pro residues; it reads PPNPTPPPPG. Residue asparagine 489 is glycosylated (N-linked (GlcNAc...) asparagine; by host). Asparagine 674 is a glycosylation site (N-linked (GlcNAc...) asparagine; by host). Positions 719-772 are hydrophobic membrane proximal region; that stretch reads IDTVIHADANAAMFAGLGAFFEGMGDLGRAVGKVVMGIVGGVVSAVSGVSSFMS. Residues 775-795 form a helical membrane-spanning segment; that stretch reads FGALAVGLLVLAGLAAAFFAF. Over 796–904 the chain is Intravirion; sequence RYVMRLQSNP…KDGDADEDDL (109 aa). Residues 849–852 carry the Golgi targeting motif; it reads YMAL. Positions 883–904 are disordered; sequence KRRNTNYTQVPNKDGDADEDDL. The short motif at 889–892 is the Internalization motif element; it reads YTQV.

Belongs to the herpesviridae glycoprotein B family. As to quaternary structure, homotrimer; disulfide-linked. Interacts with host receptor MYH9/NMMHC-IIA. Interacts with host receptor MYH10/NMMHC-IIB. Binds to heparan sulfate proteoglycans. Interacts with gH/gL heterodimer. Interacts with host DEFA1, DEFA2 and DEFA3; these interactions inhibit viral infection. In terms of processing, the cytoplasmic tail is phosphorylated by the viral kinase US3. Phosphorylation may be linked to a down-regulation of gB expression on cell surface. Ubiquitinated.

The protein resides in the virion membrane. It localises to the host cell membrane. It is found in the host endosome membrane. Its subcellular location is the host Golgi apparatus membrane. Functionally, envelope glycoprotein that forms spikes at the surface of virion envelope and binds to the host cell entry receptors MYH9/NMMHC-IIA and MYH10/NMMHC-IIB, promoting the virus entry into host cells. Essential for the initial attachment to heparan sulfate moieties of the host cell surface proteoglycans. Involved in fusion of viral and cellular membranes leading to virus entry into the host cell: following initial binding to its host cell entry receptors, membrane fusion is mediated by the fusion machinery composed at least of gB and the heterodimer gH/gL. May be involved in the fusion between the virion envelope and the outer nuclear membrane during virion egress. Also plays a role, together with gK, in virus-induced cell-to-cell fusion (syncytia formation). This is Envelope glycoprotein B from Homo sapiens (Human).